Reading from the N-terminus, the 169-residue chain is Large ribosomal subunit protein uL5 (169 aa).

The protein belongs to the universal ribosomal protein uL5 family. As to quaternary structure, part of the 50S ribosomal subunit; contacts the 5S rRNA and probably tRNA. Forms a bridge to the 30S subunit in the 70S ribosome.

Its function is as follows. This is one of the proteins that bind and probably mediate the attachment of the 5S RNA into the large ribosomal subunit, where it forms part of the central protuberance. In the 70S ribosome it contacts protein S13 of the 30S subunit (bridge B1b), connecting the 2 subunits; this bridge is implicated in subunit movement. May contact the P site tRNA; the 5S rRNA and some of its associated proteins might help stabilize positioning of ribosome-bound tRNAs. This Nanoarchaeum equitans (strain Kin4-M) protein is Large ribosomal subunit protein uL5.